Reading from the N-terminus, the 154-residue chain is MENNKILGINHLLFSVSDLSVSISFYEKVFDAKWLVKAEKTAYFDLNGIWLAFNEEKDIKRQEIHDSYTHIAFSIQQEDLPFWEKKLHDLGVNVLKGRKRHEGDRDSIYFSDPDGHKFELHTGSVFDRLQYYQNEKPHLSFHEGHIKALYDRNK.

Residues Gly-8–Gly-123 enclose the VOC domain. Mg(2+) is bound by residues His-11, His-70, and Glu-119. Residue Glu-119 is the Proton donor/acceptor of the active site.

Belongs to the fosfomycin resistance protein family. FosB subfamily. As to quaternary structure, homodimer. It depends on Mg(2+) as a cofactor.

The protein localises to the cytoplasm. In terms of biological role, metallothiol transferase which confers resistance to fosfomycin by catalyzing the addition of a thiol cofactor to fosfomycin. L-cysteine is probably the physiological thiol donor. This chain is Metallothiol transferase FosB, found in Bacillus licheniformis (strain ATCC 14580 / DSM 13 / JCM 2505 / CCUG 7422 / NBRC 12200 / NCIMB 9375 / NCTC 10341 / NRRL NRS-1264 / Gibson 46).